Consider the following 105-residue polypeptide: Small ribosomal subunit protein uS10 (105 aa).

This sequence belongs to the universal ribosomal protein uS10 family. Part of the 30S ribosomal subunit.

In terms of biological role, involved in the binding of tRNA to the ribosomes. The protein is Small ribosomal subunit protein uS10 of Picosynechococcus sp. (strain ATCC 27264 / PCC 7002 / PR-6) (Agmenellum quadruplicatum).